The chain runs to 164 residues: Protein SprT (164 aa).

In terms of domain architecture, SprT-like spans 12–157 (CFLQAESFFK…CRRCRQTLVF (146 aa)). His69 contacts Zn(2+). Glu70 is an active-site residue. His73 contacts Zn(2+).

The protein belongs to the SprT family. Zn(2+) serves as cofactor.

It localises to the cytoplasm. In Pseudomonas fluorescens (strain SBW25), this protein is Protein SprT.